We begin with the raw amino-acid sequence, 202 residues long: Securin (202 aa).

Residues M1–K92 are disordered. A2 carries the N-acetylalanine modification. Positions R61–L64 match the D-box motif. 2 consecutive short sequence motifs (TEK-box) follow at residues T71–K73 and T94–K96. An SH3-binding motif is present at residues X163–P173. The residue at position 165 (S165) is a Phosphoserine; by CDK1.

It belongs to the securin family. As to quaternary structure, interacts with RPS10 and DNAJA1. Interacts with the caspase-like ESPL1, and prevents its protease activity probably by covering its active site. Interacts with TP53 and blocks its activity probably by blocking its binding to DNA. Interacts with the Ku 70 kDa subunit of ds-DNA kinase. Interacts with PTTG1IP. In terms of processing, phosphorylated at Ser-165 by CDK1 during mitosis. Post-translationally, phosphorylated in vitro by ds-DNA kinase. Ubiquitinated through 'Lys-11' linkage of ubiquitin moieties by the anaphase promoting complex (APC) at the onset of anaphase, conducting to its degradation. 'Lys-11'-linked ubiquitination is mediated by the E2 ligase UBE2C/UBCH10.

It is found in the cytoplasm. Its subcellular location is the nucleus. Functionally, regulatory protein, which plays a central role in chromosome stability, in the p53/TP53 pathway, and DNA repair. Probably acts by blocking the action of key proteins. During the mitosis, it blocks Separase/ESPL1 function, preventing the proteolysis of the cohesin complex and the subsequent segregation of the chromosomes. At the onset of anaphase, it is ubiquitinated, conducting to its destruction and to the liberation of ESPL1. Its function is however not limited to a blocking activity, since it is required to activate ESPL1. Negatively regulates the transcriptional activity and related apoptosis activity of TP53. The negative regulation of TP53 may explain the strong transforming capability of the protein when it is overexpressed. May also play a role in DNA repair via its interaction with Ku, possibly by connecting DNA damage-response pathways with sister chromatid separation. In Pan troglodytes (Chimpanzee), this protein is Securin (PTTG1).